The sequence spans 400 residues: Probable peptidoglycan glycosyltransferase FtsW (400 aa).

The Cytoplasmic segment spans residues 1–29 (MVIERIKHLASPLQDWVFTPSPKVMFDRQ). Residues 30 to 50 (LIWIALGLMLTGLVMVASASF) form a helical membrane-spanning segment. Residues 51–60 (PISTRLTGQP) are Periplasmic-facing. A helical transmembrane segment spans residues 61–81 (FHFMMRHMLFVFLALSISSIV). At 82 to 95 (LRIELNKWLKYSSH) the chain is on the cytoplasmic side. The chain crosses the membrane as a helical span at residues 96–116 (LLLISLLLLAAVLVVGKSVNG). Residues 117-122 (AARWLP) lie on the Periplasmic side of the membrane. Residues 123-143 (LGIFNLQPAEVAKLSLFVFIA) form a helical membrane-spanning segment. Over 144 to 155 (GYLVRRHGEVRD) the chain is Cytoplasmic. A helical membrane pass occupies residues 156-176 (SFRGFVKPLLVLITLAFFLLM). The Periplasmic portion of the chain corresponds to 177–178 (QP). A helical transmembrane segment spans residues 179–199 (DLGTTVVMFVTTIAMLFIAGA). Lys200 is a topological domain (cytoplasmic). Residues 201–221 (LWQFIALVMGGISLVIVLILA) form a helical membrane-spanning segment. Residues 222 to 290 (EPYRMRRVTS…VFAVIAEELG (69 aa)) lie on the Periplasmic side of the membrane. A helical membrane pass occupies residues 291-311 (FVGVCLVLCLIFALVFKALLI). Residues 312–321 (GRKCLAHDQR) lie on the Cytoplasmic side of the membrane. The chain crosses the membrane as a helical span at residues 322–342 (FGGFLAFGIGIWFAFQTLVNV). Over 343 to 356 (GAAAGIVPTKGLTL) the chain is Periplasmic. Residues 357-377 (PLISYGGSSLIIMSVAVSLLI) traverse the membrane as a helical segment. Residues 378–400 (RIDHECRVYLANEPPRSENEEQK) are Cytoplasmic-facing.

Belongs to the SEDS family. FtsW subfamily.

Its subcellular location is the cell inner membrane. It carries out the reaction [GlcNAc-(1-&gt;4)-Mur2Ac(oyl-L-Ala-gamma-D-Glu-L-Lys-D-Ala-D-Ala)](n)-di-trans,octa-cis-undecaprenyl diphosphate + beta-D-GlcNAc-(1-&gt;4)-Mur2Ac(oyl-L-Ala-gamma-D-Glu-L-Lys-D-Ala-D-Ala)-di-trans,octa-cis-undecaprenyl diphosphate = [GlcNAc-(1-&gt;4)-Mur2Ac(oyl-L-Ala-gamma-D-Glu-L-Lys-D-Ala-D-Ala)](n+1)-di-trans,octa-cis-undecaprenyl diphosphate + di-trans,octa-cis-undecaprenyl diphosphate + H(+). It participates in cell wall biogenesis; peptidoglycan biosynthesis. Peptidoglycan polymerase that is essential for cell division. The polypeptide is Probable peptidoglycan glycosyltransferase FtsW (Aliivibrio salmonicida (strain LFI1238) (Vibrio salmonicida (strain LFI1238))).